Here is an 84-residue protein sequence, read N- to C-terminus: Defensin-like protein 172 (84 aa).

A signal peptide spans 1-23; that stretch reads MAKASSTLVLSIIFLVMFALVEQ. 4 disulfides stabilise this stretch: C27/C74, C34/C56, C40/C68, and C44/C70.

The protein belongs to the DEFL family.

It is found in the secreted. The chain is Defensin-like protein 172 (LCR60) from Arabidopsis thaliana (Mouse-ear cress).